Here is a 468-residue protein sequence, read N- to C-terminus: Ribulose bisphosphate carboxylase large chain (468 aa).

K5 is subject to N6,N6,N6-trimethyllysine. Substrate-binding residues include N114 and T164. K166 acts as the Proton acceptor in catalysis. Position 168 (K168) interacts with substrate. Residues K192, D194, and E195 each contribute to the Mg(2+) site. Position 192 is an N6-carboxylysine (K192). Catalysis depends on H285, which acts as the Proton acceptor. Substrate contacts are provided by R286, H318, and S370.

It belongs to the RuBisCO large chain family. Type I subfamily. In terms of assembly, heterohexadecamer of 8 large chains and 8 small chains; disulfide-linked. The disulfide link is formed within the large subunit homodimers. Requires Mg(2+) as cofactor. Post-translationally, the disulfide bond which can form in the large chain dimeric partners within the hexadecamer appears to be associated with oxidative stress and protein turnover.

It localises to the plastid. It is found in the chloroplast. The enzyme catalyses 2 (2R)-3-phosphoglycerate + 2 H(+) = D-ribulose 1,5-bisphosphate + CO2 + H2O. It catalyses the reaction D-ribulose 1,5-bisphosphate + O2 = 2-phosphoglycolate + (2R)-3-phosphoglycerate + 2 H(+). Its function is as follows. RuBisCO catalyzes two reactions: the carboxylation of D-ribulose 1,5-bisphosphate, the primary event in carbon dioxide fixation, as well as the oxidative fragmentation of the pentose substrate in the photorespiration process. Both reactions occur simultaneously and in competition at the same active site. This is Ribulose bisphosphate carboxylase large chain from Solandra grandiflora (Chalice vine).